Here is a 329-residue protein sequence, read N- to C-terminus: MSDLTICTHSGSFHADEALACYLLKLLPTYKDSKIIRSRDKSVIEKSTVAVDVGAVYNFEKLRFDHHQSGFTETFDDKHDIKLSSAGLIYKHYGKDIIKQRLDTNDSITELLYQKLYDSMIQELDGVDNGVERYPSDIKPRYQSGSSISARVGHLNQGWNEPQDDEIVNKQFEKAMELMGQYFLDRLDYYGKSWLPCRSIVENALENRKQTHSSGEILILDMFCPWKDHLFSLEQEKDIKTPIKFVLFEDTSGQWRVSAVGINLHSFTLRLPLPEEWRGKRDEELSQISGIEGCVFAHANGFIGGNKTREGALLMAIKTLNQSPKTLLE.

It belongs to the MYG1 family.

The polypeptide is MYG1 protein (Dictyostelium discoideum (Social amoeba)).